The sequence spans 396 residues: Elongation factor Tu 2 (396 aa).

One can recognise a tr-type G domain in the interval 10 to 206 (KPHVNVGTIG…ALDSYIPLPE (197 aa)). The segment at 19–26 (GHVDHGKT) is G1. 19–26 (GHVDHGKT) contributes to the GTP binding site. Thr-26 is a Mg(2+) binding site. Residues 60–64 (GITIN) are G2. The G3 stretch occupies residues 81–84 (DCPG). GTP is bound by residues 81–85 (DCPGH) and 136–139 (NKCD). Residues 136 to 139 (NKCD) are G4. The interval 174–176 (SAK) is G5.

Belongs to the TRAFAC class translation factor GTPase superfamily. Classic translation factor GTPase family. EF-Tu/EF-1A subfamily. As to quaternary structure, monomer.

It is found in the cytoplasm. The enzyme catalyses GTP + H2O = GDP + phosphate + H(+). Its function is as follows. GTP hydrolase that promotes the GTP-dependent binding of aminoacyl-tRNA to the A-site of ribosomes during protein biosynthesis. The polypeptide is Elongation factor Tu 2 (Albidiferax ferrireducens (strain ATCC BAA-621 / DSM 15236 / T118) (Rhodoferax ferrireducens)).